A 343-amino-acid chain; its full sequence is Heat-inducible transcription repressor HrcA (343 aa).

The protein belongs to the HrcA family.

In terms of biological role, negative regulator of class I heat shock genes (grpE-dnaK-dnaJ and groELS operons). Prevents heat-shock induction of these operons. In Bacillus pumilus (strain SAFR-032), this protein is Heat-inducible transcription repressor HrcA.